The following is a 68-amino-acid chain: Large ribosomal subunit protein uL29 (68 aa).

The protein belongs to the universal ribosomal protein uL29 family.

The protein is Large ribosomal subunit protein uL29 of Limosilactobacillus reuteri (strain DSM 20016) (Lactobacillus reuteri).